The chain runs to 373 residues: Mating-type protein A-2 (373 aa).

Residues 1–22 (MNLLNMQPKRSEQPAMFEENRA) form a disordered region.

It to P.anserina SMR1.

In terms of biological role, required, together with mating-type protein A-3, for efficient ascospore formation. This chain is Mating-type protein A-2 (matA-2), found in Neurospora crassa (strain ATCC 24698 / 74-OR23-1A / CBS 708.71 / DSM 1257 / FGSC 987).